We begin with the raw amino-acid sequence, 248 residues long: Phosphate import ATP-binding protein PstB (248 aa).

Positions 1–243 (MAVNDVNVFY…PQHNLTQGYI (243 aa)) constitute an ABC transporter domain. Position 33–40 (33–40 (GPSGCGKS)) interacts with ATP.

It belongs to the ABC transporter superfamily. Phosphate importer (TC 3.A.1.7) family. In terms of assembly, the complex is composed of two ATP-binding proteins (PstB), two transmembrane proteins (PstC and PstA) and a solute-binding protein (PstS).

The protein localises to the cell inner membrane. The catalysed reaction is phosphate(out) + ATP + H2O = ADP + 2 phosphate(in) + H(+). In terms of biological role, part of the ABC transporter complex PstSACB involved in phosphate import. Responsible for energy coupling to the transport system. The chain is Phosphate import ATP-binding protein PstB from Rhodospirillum rubrum (strain ATCC 11170 / ATH 1.1.1 / DSM 467 / LMG 4362 / NCIMB 8255 / S1).